The chain runs to 252 residues: Vitamin B12 import ATP-binding protein BtuD (252 aa).

One can recognise an ABC transporter domain in the interval 2–237; that stretch reads IQIKSLSVGA…EQLESVFNTQ (236 aa). ATP is bound at residue 30–37; sequence GPNGSGKS.

This sequence belongs to the ABC transporter superfamily. Vitamin B12 importer (TC 3.A.1.13.1) family. As to quaternary structure, the complex is composed of two ATP-binding proteins (BtuD), two transmembrane proteins (BtuC) and a solute-binding protein (BtuF).

It is found in the cell inner membrane. The catalysed reaction is an R-cob(III)alamin(out) + ATP + H2O = an R-cob(III)alamin(in) + ADP + phosphate + H(+). Functionally, part of the ABC transporter complex BtuCDF involved in vitamin B12 import. Responsible for energy coupling to the transport system. The protein is Vitamin B12 import ATP-binding protein BtuD of Vibrio atlanticus (strain LGP32) (Vibrio splendidus (strain Mel32)).